The chain runs to 634 residues: Probable LRR receptor-like serine/threonine-protein kinase At2g23950 (634 aa).

Residues 1-27 (MVVMKLITMKIFSVLLLLCFFVTCSLS) form the signal peptide. Over 28 to 236 (SEPRNPEVEA…SSGRRTNILA (209 aa)) the chain is Extracellular. N-linked (GlcNAc...) asparagine glycosylation is found at asparagine 96 and asparagine 109. LRR repeat units lie at residues 99-121 (NLRQ…ICSL), 123-145 (KLQT…VNQL), 147-167 (NLQY…ASLS), and 171-193 (HLSF…PART). Asparagine 155 is a glycosylation site (N-linked (GlcNAc...) asparagine). The chain crosses the membrane as a helical span at residues 237–257 (VALGVSLGFAVSVILSLGFIW). At 258–634 (YRKKQRRLTM…SFAMELSGPR (377 aa)) the chain is on the cytoplasmic side. Threonine 296 bears the Phosphothreonine mark. In terms of domain architecture, Protein kinase spans 299-554 (FSSKSILGAG…QVALLCTQFL (256 aa)). ATP is bound at residue 305 to 313 (LGAGGFGNV). Residue threonine 322 is modified to Phosphothreonine. Lysine 327 serves as a coordination point for ATP. A phosphoserine mark is found at serine 380 and serine 383. Threonine 395 is modified (phosphothreonine). The Proton acceptor role is filled by aspartate 422. 3 positions are modified to phosphothreonine: threonine 455, threonine 456, and threonine 461. Position 469 is a phosphotyrosine (tyrosine 469). Phosphoserine is present on serine 471. Threonine 472 bears the Phosphothreonine mark. At serine 476 the chain carries Phosphoserine. Threonine 551 carries the post-translational modification Phosphothreonine.

This sequence belongs to the protein kinase superfamily. Ser/Thr protein kinase family.

Its subcellular location is the membrane. The catalysed reaction is L-seryl-[protein] + ATP = O-phospho-L-seryl-[protein] + ADP + H(+). It catalyses the reaction L-threonyl-[protein] + ATP = O-phospho-L-threonyl-[protein] + ADP + H(+). The chain is Probable LRR receptor-like serine/threonine-protein kinase At2g23950 from Arabidopsis thaliana (Mouse-ear cress).